The primary structure comprises 315 residues: Methionyl-tRNA formyltransferase (315 aa).

113–116 is a binding site for (6S)-5,6,7,8-tetrahydrofolate; the sequence is SLLP.

The protein belongs to the Fmt family.

The enzyme catalyses L-methionyl-tRNA(fMet) + (6R)-10-formyltetrahydrofolate = N-formyl-L-methionyl-tRNA(fMet) + (6S)-5,6,7,8-tetrahydrofolate + H(+). Attaches a formyl group to the free amino group of methionyl-tRNA(fMet). The formyl group appears to play a dual role in the initiator identity of N-formylmethionyl-tRNA by promoting its recognition by IF2 and preventing the misappropriation of this tRNA by the elongation apparatus. In Pectobacterium carotovorum subsp. carotovorum (strain PC1), this protein is Methionyl-tRNA formyltransferase.